Reading from the N-terminus, the 88-residue chain is Small ribosomal subunit protein bS20 (88 aa).

Belongs to the bacterial ribosomal protein bS20 family.

Functionally, binds directly to 16S ribosomal RNA. This Clostridium acetobutylicum (strain ATCC 824 / DSM 792 / JCM 1419 / IAM 19013 / LMG 5710 / NBRC 13948 / NRRL B-527 / VKM B-1787 / 2291 / W) protein is Small ribosomal subunit protein bS20.